The chain runs to 165 residues: Late embryogenesis abundant protein D-113 (165 aa).

Low complexity predominate over residues 1–13; sequence MQSMKDAAASAKA. Disordered stretches follow at residues 1-76 and 92-165; these read MQSM…IGGT and GGTG…YRSY. Over residues 14 to 60 the composition is skewed to basic and acidic residues; it reads GMEKAKASMQEKVDQMKTRDPNEKEMARERKEERQEDAELRKQEARH. Gly residues predominate over residues 67 to 76; that stretch reads HVGGGGIGGT. Positions 132-155 are enriched in polar residues; that stretch reads TTGNQDFPNAASNNAGTRRNTRGG.

The protein belongs to the LEA type 1 family.

LEA proteins are late embryonic proteins abundant in higher plant seed embryos. There are two subsets of LEA proteins (5a and 5b), the first ones are expressed when the cotyledon weight reach 80 mg and the second set are expressed above 100 mg. The function of those proteins is not known. The sequence is that of Late embryogenesis abundant protein D-113 from Gossypium hirsutum (Upland cotton).